The following is a 552-amino-acid chain: Cleavage and polyadenylation specificity factor subunit 6 (552 aa).

The segment at 1 to 213 (MADGVDHIDI…RGRFPGAVPG (213 aa)) is necessary for interaction with NXF1. An RRM domain is found at 81 to 161 (IALYIGNLTR…QNPVVTPCNK (81 aa)). The segment at 81–161 (IALYIGNLTR…QNPVVTPCNK (81 aa)) is necessary for interaction with NUDT21/CPSF5. Residues 81 to 161 (IALYIGNLTR…QNPVVTPCNK (81 aa)) are necessary for nuclear paraspeckles localization. Thr157 is modified (phosphothreonine). The span at 169–180 (MQSRKTTQSGQM) shows a compositional bias: polar residues. Disordered stretches follow at residues 169–411 (MQSR…PLSE) and 479–552 (GIES…YRHR). The GAR motif lies at 202–206 (RGRGR). A compositionally biased stretch (low complexity) spans 207-219 (FPGAVPGGDRFPG). 3 stretches are compositionally biased toward pro residues: residues 220-265 (PTGP…PLAG), 285-366 (GQPP…PPPT), and 377-388 (GPPPTDPYGRPP). Residues 389-404 (PYDRGDYGPPGREMDT) are compositionally biased toward basic and acidic residues. Thr404 and Thr407 each carry phosphothreonine. The interval 404–552 (TARTPLSEAE…RDREREYRHR (149 aa)) is sufficient for nuclear speckle localization. A necessary for RNA-binding region spans residues 405 to 552 (ARTPLSEAEF…RDREREYRHR (148 aa)). The tract at residues 481 to 552 (ESKSYGSGSR…RDREREYRHR (72 aa)) is necessary for interaction with SRSF3, SRSF7 and TRA2B/SFRS10. Residues 491–552 (RRERSRERDH…RDREREYRHR (62 aa)) form an arg/Ser-rich domain region. Residues 494 to 504 (RSRERDHSRSR) are compositionally biased toward basic and acidic residues. Phosphoserine is present on residues Ser495, Ser501, Ser512, Ser514, and Ser526. Over residues 505–515 (EKSRRHKSRSR) the composition is skewed to basic residues. Residues 511–552 (KSRSRDRHDDYYRERSRERERHRDRDRDRDRERDREREYRHR) are sufficient for nuclear targeting. Basic and acidic residues predominate over residues 516-552 (DRHDDYYRERSRERERHRDRDRDRDRERDREREYRHR).

This sequence belongs to the RRM CPSF6/7 family. Component of the cleavage factor Im (CFIm) complex which is a heterotetramer composed of two subunits of NUDT21/CPSF5 and two subunits of CPSF6 or CPSF7 or a heterodimer of CPSF6 and CPSF7. The cleavage factor Im (CFIm) complex associates with the CPSF and CSTF complexes to promote the assembly of the core mRNA 3'-processing machinery. Associates with the exon junction complex (EJC). Associates with the 80S ribosome particle. Interacts (via the RRM domain) with NUDT21/CPSF5; this interaction is direct and enhances binding to RNA. Interacts (via Arg/Ser-rich domain) with FIP1L1 (preferentially via unphosphorylated form and Arg/Glu/Asp-rich domain); this interaction mediates, at least in part, the interaction between the CFIm and CPSF complexes and may be inhibited by CPSF6 hyper-phosphorylation. Interacts (via N-terminus) with NXF1; this interaction is direct. Interacts with SRSF3. Interacts with SRSF7. Interacts with SNRNP70. Interacts with TRA2B/SFRS10. Interacts with UPF1. Interacts with UPF3B. Interacts with VIRMA. Interacts (via Arg/Ser-rich domain) with TNPO3; promoting nuclear import of CPSF6 independently of its phosphorylation status. Interacts with YTHDC1. In terms of processing, phosphorylated. Phosphorylated in the Arg/Ser-rich domain by SRPK1, in vitro. Symmetrically dimethylated on arginine residues in the GAR motif by PRMT5 in a WDR77- and CLNS1A-dependent manner. Asymmetrically dimethylated on arginine residues in the GAR motif by PRMT1.

The protein resides in the nucleus. It is found in the nucleoplasm. It localises to the nucleus speckle. Its subcellular location is the cytoplasm. In terms of biological role, component of the cleavage factor Im (CFIm) complex that functions as an activator of the pre-mRNA 3'-end cleavage and polyadenylation processing required for the maturation of pre-mRNA into functional mRNAs. CFIm contributes to the recruitment of multiprotein complexes on specific sequences on the pre-mRNA 3'-end, so called cleavage and polyadenylation signals (pA signals). Most pre-mRNAs contain multiple pA signals, resulting in alternative cleavage and polyadenylation (APA) producing mRNAs with variable 3'-end formation. The CFIm complex acts as a key regulator of cleavage and polyadenylation site choice during APA through its binding to 5'-UGUA-3' elements localized in the 3'-untranslated region (UTR) for a huge number of pre-mRNAs. CPSF6 enhances NUDT21/CPSF5 binding to 5'-UGUA-3' elements localized upstream of pA signals and promotes RNA looping, and hence activates directly the mRNA 3'-processing machinery. Plays a role in mRNA export. This chain is Cleavage and polyadenylation specificity factor subunit 6, found in Pongo abelii (Sumatran orangutan).